The sequence spans 138 residues: Transcription antitermination protein NusB (138 aa).

The protein belongs to the NusB family.

Functionally, involved in transcription antitermination. Required for transcription of ribosomal RNA (rRNA) genes. Binds specifically to the boxA antiterminator sequence of the ribosomal RNA (rrn) operons. The polypeptide is Transcription antitermination protein NusB (Helicobacter pylori (strain J99 / ATCC 700824) (Campylobacter pylori J99)).